Reading from the N-terminus, the 351-residue chain is Putative aryl-alcohol dehydrogenase C977.14c (351 aa).

Residue S113 is modified to Phosphoserine.

It belongs to the aldo/keto reductase family. Aldo/keto reductase 2 subfamily.

It is found in the cytoplasm. Its subcellular location is the nucleus. In Schizosaccharomyces pombe (strain 972 / ATCC 24843) (Fission yeast), this protein is Putative aryl-alcohol dehydrogenase C977.14c.